Here is a 700-residue protein sequence, read N- to C-terminus: Mei4-dependent protein 6 (700 aa).

6 Kelch repeats span residues 276–322 (CIYL…MVID), 327–381 (KLYL…FDHG), 390–439 (IVYV…KIER), 452–499 (KLYI…FCQR), 508–558 (RIFT…SRFG), and 569–619 (IIYL…RFHE).

The protein is Mei4-dependent protein 6 (mde6) of Schizosaccharomyces pombe (strain 972 / ATCC 24843) (Fission yeast).